Here is a 1039-residue protein sequence, read N- to C-terminus: Beta-galactosidase (1039 aa).

Substrate-binding residues include N103 and D201. Position 201 (D201) interacts with Na(+). Residues E415, H417, and E460 each contribute to the Mg(2+) site. Residues E460 and 536–539 each bind substrate; that span reads EYAH. Residue E460 is the Proton donor of the active site. Catalysis depends on E536, which acts as the Nucleophile. N596 is a binding site for Mg(2+). Na(+) contacts are provided by F600 and N603. Substrate-binding residues include N603 and W1012.

Belongs to the glycosyl hydrolase 2 family. In terms of assembly, homotetramer. Mg(2+) serves as cofactor. The cofactor is Na(+).

It catalyses the reaction Hydrolysis of terminal non-reducing beta-D-galactose residues in beta-D-galactosides.. With respect to regulation, inhibited by zinc, copper and nickel ions. Activated by 2-mercaptoethanol and inhibited by EDTA in vitro. The protein is Beta-galactosidase (lacZ) of Pseudoalteromonas haloplanktis (Alteromonas haloplanktis).